Here is a 131-residue protein sequence, read N- to C-terminus: Global transcriptional regulator Spx 1 (131 aa).

Cysteines 10 and 13 form a disulfide.

Belongs to the ArsC family. Spx subfamily. In terms of assembly, interacts with the C-terminal domain of the alpha subunit of the RNAP.

The protein resides in the cytoplasm. In terms of biological role, global transcriptional regulator that plays a key role in stress response and exerts either positive or negative regulation of genes. Acts by interacting with the C-terminal domain of the alpha subunit of the RNA polymerase (RNAP). This interaction can enhance binding of RNAP to the promoter region of target genes and stimulate their transcription, or block interaction of RNAP with activator. The protein is Global transcriptional regulator Spx 1 of Bacillus anthracis.